The sequence spans 527 residues: Peptide chain release factor 3 (527 aa).

Residues 9 to 277 (AKRRTFAIIS…AVVNWAPKPL (269 aa)) form the tr-type G domain. Residues 18–25 (SHPDAGKT), 86–90 (DTPGH), and 140–143 (NKLD) contribute to the GTP site.

This sequence belongs to the TRAFAC class translation factor GTPase superfamily. Classic translation factor GTPase family. PrfC subfamily.

The protein localises to the cytoplasm. Functionally, increases the formation of ribosomal termination complexes and stimulates activities of RF-1 and RF-2. It binds guanine nucleotides and has strong preference for UGA stop codons. It may interact directly with the ribosome. The stimulation of RF-1 and RF-2 is significantly reduced by GTP and GDP, but not by GMP. In Pseudomonas savastanoi pv. phaseolicola (strain 1448A / Race 6) (Pseudomonas syringae pv. phaseolicola (strain 1448A / Race 6)), this protein is Peptide chain release factor 3.